We begin with the raw amino-acid sequence, 325 residues long: Zinc finger C2HC domain-containing protein 1A (325 aa).

The C2HC/C3H-type 1 zinc-finger motif lies at 15–44 (ELLPCKICGRTFFPVALKKHGPICQKTATK). Residues Cys19, Cys22, His34, and Cys38 each coordinate Zn(2+). The disordered stretch occupies residues 43 to 83 (TKKRKTFDSSRQRAEGTDIPTVKPLKPRPEPPKKPSNWRRK). Positions 48–58 (TFDSSRQRAEG) are enriched in basic and acidic residues. Residues 118 to 147 (DYIQCPYCQRRFNENAADRHINFCKEQAAR) form a C2HC/C3H-type 2 zinc finger. Residues Cys122, Cys125, His137, and Cys141 each coordinate Zn(2+). The tract at residues 150–260 (NKGKFSTDTK…NPAPGVLTNK (111 aa)) is disordered. Composition is skewed to low complexity over residues 177–188 (SNSPGTASSGSS) and 197–216 (GKTV…SSLG). At Ser223 the chain carries Phosphoserine. At Thr244 the chain carries Phosphothreonine. Residue Ser292 is modified to Phosphoserine.

This sequence belongs to the ZC2HC1 family. Zn(2+) serves as cofactor.

This Homo sapiens (Human) protein is Zinc finger C2HC domain-containing protein 1A (ZC2HC1A).